Reading from the N-terminus, the 260-residue chain is Caveolae-associated protein 3 (260 aa).

The interaction with CAVIN1 stretch occupies residues 1-84 (MGESALESGP…SNTLAQLLAK (84 aa)). Positions 20–78 (VHAVTVVTLLEKLATMLETLRERQGGLAQRQGGLAGSVRRIQSNLGALSRSHDTTSNTL) are leucine-zipper. Phosphoserine occurs at positions 62 and 70. A Glycyl lysine isopeptide (Lys-Gly) (interchain with G-Cter in SUMO2) cross-link involves residue Lys-128. The segment at 135–201 (AKAFQKAPEP…SGRKGHAAPT (67 aa)) is interaction with CAV1. Residues 140–260 (KAPEPLGPVE…AAVLQVESAA (121 aa)) form a disordered region. Positions 157–168 (AEAEESSDEEEP) are enriched in acidic residues. A phosphoserine mark is found at Ser-162, Ser-163, and Ser-171. The segment covering 201 to 210 (TPTPVKPPRL) has biased composition (pro residues).

It belongs to the CAVIN family. As to quaternary structure, component of the CAVIN complex composed of CAVIN1, CAVIN2, CAVIN3 and CAVIN4. Interacts with PRKCD and with phosphatidylserine. Phosphatidylserine may form a bridge between PKC and PKC-binding partners and stabilize the binding. Interacts with PER2. Interacts with CAVIN1 and EPS15L1. Interacts (via leucine-zipper domain) with CAV1 in a cholesterol-sensitive manner. Post-translationally, in vitro, phosphorylated by PRKCD.

Its subcellular location is the cytoplasm. The protein localises to the membrane. It localises to the caveola. It is found in the cytosol. Its function is as follows. Regulates the traffic and/or budding of caveolae. Plays a role in caveola formation in a tissue-specific manner. Required for the formation of caveolae in smooth muscle but not in the lung and heart endothelial cells. Regulates the equilibrium between cell surface-associated and cell surface-dissociated caveolae by promoting the rapid release of caveolae from the cell surface. Plays a role in the regulation of the circadian clock. Modulates the period length and phase of circadian gene expression and also regulates expression and interaction of the core clock components PER1/2 and CRY1/2. This is Caveolae-associated protein 3 (CAVIN3) from Bos taurus (Bovine).